The sequence spans 495 residues: MSGIHDFTLASARDALKARKISAVELTNAHIDAIERLDGQLNSFITRTPDQAREAAKASDEALAKGEGGSLCGIPLGIKDLFCTNGVRTTAASKILGNFVPPYESTVTANLLKDGAVFLGKLNLDEFAMGSANLTSAFGPVENPWKRKDSDAKLVPGGSSGGSAAAVAAGLVLGATGTDTGGSIRQPAAFTGIAGIKPTYGRCSRFGTIAFASSLDQAGPMARNLQDCAILLESMAGFDPRDSTSVDTPVPHYEAALKRGVKGLRVGIPKEYHVEGMPAEIEALWQQGMTWLRDVGAEIVEVSLPHTKYGLPTYYIAALAEASSNLARYDGVRFGERVSASTLDGLYEASRAAGFGDEVKRRILIGTHVLSSGYYDAYYLRAQKVRTLIQQDFLKAFENVDVLLTPTAPSGAFAQDEKPTDPVQMYLNDVFTVPASMAGVPALSVPAGLDARGVPLGLQLIGKFFDEETLIAAGHAIEQAAAFHHRPTIHAGVSA.

Catalysis depends on charge relay system residues Lys-79 and Ser-159. The active-site Acyl-ester intermediate is the Ser-183.

Belongs to the amidase family. GatA subfamily. In terms of assembly, heterotrimer of A, B and C subunits.

It catalyses the reaction L-glutamyl-tRNA(Gln) + L-glutamine + ATP + H2O = L-glutaminyl-tRNA(Gln) + L-glutamate + ADP + phosphate + H(+). Functionally, allows the formation of correctly charged Gln-tRNA(Gln) through the transamidation of misacylated Glu-tRNA(Gln) in organisms which lack glutaminyl-tRNA synthetase. The reaction takes place in the presence of glutamine and ATP through an activated gamma-phospho-Glu-tRNA(Gln). The chain is Glutamyl-tRNA(Gln) amidotransferase subunit A from Gluconobacter oxydans (strain 621H) (Gluconobacter suboxydans).